A 982-amino-acid chain; its full sequence is Glycine dehydrogenase (decarboxylating) (982 aa).

Residue Lys721 is modified to N6-(pyridoxal phosphate)lysine.

The protein belongs to the GcvP family. In terms of assembly, the glycine cleavage system is composed of four proteins: P, T, L and H. It depends on pyridoxal 5'-phosphate as a cofactor.

It carries out the reaction N(6)-[(R)-lipoyl]-L-lysyl-[glycine-cleavage complex H protein] + glycine + H(+) = N(6)-[(R)-S(8)-aminomethyldihydrolipoyl]-L-lysyl-[glycine-cleavage complex H protein] + CO2. In terms of biological role, the glycine cleavage system catalyzes the degradation of glycine. The P protein binds the alpha-amino group of glycine through its pyridoxal phosphate cofactor; CO(2) is released and the remaining methylamine moiety is then transferred to the lipoamide cofactor of the H protein. This is Glycine dehydrogenase (decarboxylating) from Prochlorococcus marinus (strain MIT 9303).